The sequence spans 251 residues: Putative F-box protein PP2-B12 (251 aa).

The F-box domain occupies 1–46 (MNFLDLPEECIATMISFTSPFDACRISAVSKLLRSAADSNTTWERF).

This is Putative F-box protein PP2-B12 (PP2B12) from Arabidopsis thaliana (Mouse-ear cress).